A 218-amino-acid polypeptide reads, in one-letter code: Cytidylate kinase (218 aa).

10 to 18 (GPAAAGKST) is an ATP binding site.

Belongs to the cytidylate kinase family. Type 1 subfamily.

The protein resides in the cytoplasm. The catalysed reaction is CMP + ATP = CDP + ADP. It catalyses the reaction dCMP + ATP = dCDP + ADP. The polypeptide is Cytidylate kinase (Staphylococcus haemolyticus (strain JCSC1435)).